The sequence spans 87 residues: Protein L (87 aa).

This protein inhibits the multiplication of double-stranded DNA phages, such as P1 and lambda. The sequence is that of Protein L (L) from Escherichia coli.